The primary structure comprises 362 residues: Heme A synthase (362 aa).

5 helical membrane passes run 12 to 32 (AVKIWLGAIAALIAAMVLVGG), 102 to 122 (VIGLAYLLPFLWFIWRGHLGG), 128 to 148 (LWLIFGLGALQGAVGWWMVAS), 159 to 179 (ERLAIHLTLALVIFAAIVWTL), and 198 to 218 (AAALLALTFVQIFFGALVAGL). His262 serves as a coordination point for heme. 3 helical membrane passes run 264-286 (MLAYALWALAIAHAIDAVRARAG), 291-311 (GAVWFAAALTLQAALGIFTLL), and 314-334 (VPIGLALAHQAVAVLVLMLGV). Residue His322 coordinates heme.

This sequence belongs to the COX15/CtaA family. Type 2 subfamily. Interacts with CtaB. It depends on heme b as a cofactor.

The protein localises to the cell membrane. The catalysed reaction is Fe(II)-heme o + 2 A + H2O = Fe(II)-heme a + 2 AH2. Its pathway is porphyrin-containing compound metabolism; heme A biosynthesis; heme A from heme O: step 1/1. Catalyzes the conversion of heme O to heme A by two successive hydroxylations of the methyl group at C8. The first hydroxylation forms heme I, the second hydroxylation results in an unstable dihydroxymethyl group, which spontaneously dehydrates, resulting in the formyl group of heme A. This is Heme A synthase from Rhodopseudomonas palustris (strain BisA53).